A 116-amino-acid polypeptide reads, in one-letter code: Secreted RxLR effector protein 9 (116 aa).

Residues Met-1–Ala-17 form the signal peptide. The RxLR-dEER signature appears at Arg-49 to Arg-64.

Belongs to the RxLR effector family.

It localises to the secreted. It is found in the host cytoplasm. The protein resides in the host nucleus. Its function is as follows. Effector that acts as a broad suppressor of cell death to interrupt plant immunity. Inhibits cell death induced by cell death-inducing proteins, including the PAMP elicitor INF1 from P.infestans. This chain is Secreted RxLR effector protein 9, found in Plasmopara viticola (Downy mildew of grapevine).